Here is a 504-residue protein sequence, read N- to C-terminus: UDP-N-acetylmuramoylalanine--D-glutamate ligase (504 aa).

129–135 is a binding site for ATP; the sequence is GTNGKTT.

The protein belongs to the MurCDEF family.

Its subcellular location is the cytoplasm. It catalyses the reaction UDP-N-acetyl-alpha-D-muramoyl-L-alanine + D-glutamate + ATP = UDP-N-acetyl-alpha-D-muramoyl-L-alanyl-D-glutamate + ADP + phosphate + H(+). The protein operates within cell wall biogenesis; peptidoglycan biosynthesis. Functionally, cell wall formation. Catalyzes the addition of glutamate to the nucleotide precursor UDP-N-acetylmuramoyl-L-alanine (UMA). The sequence is that of UDP-N-acetylmuramoylalanine--D-glutamate ligase from Burkholderia mallei (strain NCTC 10247).